Here is a 194-residue protein sequence, read N- to C-terminus: uncharacterized protein (194 aa).

An Exonuclease domain is found at 20–185; the sequence is RIFIDTETTG…ADCRMTLGII (166 aa).

This is an uncharacterized protein from Escherichia coli (Bacteriophage 186).